The primary structure comprises 190 residues: GTP cyclohydrolase 1 (190 aa).

Zn(2+)-binding residues include Cys-75, His-78, and Cys-146.

Belongs to the GTP cyclohydrolase I family. Toroid-shaped homodecamer, composed of two pentamers of five dimers.

It carries out the reaction GTP + H2O = 7,8-dihydroneopterin 3'-triphosphate + formate + H(+). The protein operates within cofactor biosynthesis; 7,8-dihydroneopterin triphosphate biosynthesis; 7,8-dihydroneopterin triphosphate from GTP: step 1/1. The polypeptide is GTP cyclohydrolase 1 (Campylobacter jejuni subsp. doylei (strain ATCC BAA-1458 / RM4099 / 269.97)).